The primary structure comprises 308 residues: uncharacterized protein (308 aa).

10 helical membrane-spanning segments follow: residues 6–26 (VVLI…FGIL), 31–51 (AKIL…FLTI), 63–83 (FLKL…LAYL), 100–120 (ILVS…LGMF), 128–148 (AIFC…YVGI), 162–182 (MAKF…FFGF), 195–215 (LNYL…LSLS), 221–241 (FGVF…PATA), 257–277 (VLLV…GTLY), and 287–307 (SIFI…WILL).

It belongs to the auxin efflux carrier (TC 2.A.69) family.

Its subcellular location is the cell membrane. This is an uncharacterized protein from Methanocaldococcus jannaschii (strain ATCC 43067 / DSM 2661 / JAL-1 / JCM 10045 / NBRC 100440) (Methanococcus jannaschii).